Here is a 244-residue protein sequence, read N- to C-terminus: Electron transfer flavoprotein beta subunit lysine methyltransferase homolog (244 aa).

The protein belongs to the methyltransferase superfamily. ETFBKMT family.

Functionally, probable methyltransferase. The polypeptide is Electron transfer flavoprotein beta subunit lysine methyltransferase homolog (Caenorhabditis elegans).